We begin with the raw amino-acid sequence, 187 residues long: MEDKKIAMEETIRSIFDFIGDDRHREGLLDTPKRVVKSWDKLYSGYTQDPREILGTVFEDGACDEMVVLKNIEFYSMCEHHMLPFFGKVSIGYIPDQKVVGISKLARLVEVFARRLQIQEKMTGQIADTLMEVLQPKGAMVVAEATHMCMVMRGVEKQQSVMVTSAVRGLFKRDARTREEFMGHIRH.

Cys78, His81, and Cys149 together coordinate Zn(2+).

Belongs to the GTP cyclohydrolase I family. As to quaternary structure, toroid-shaped homodecamer, composed of two pentamers of five dimers.

The catalysed reaction is GTP + H2O = 7,8-dihydroneopterin 3'-triphosphate + formate + H(+). It functions in the pathway cofactor biosynthesis; 7,8-dihydroneopterin triphosphate biosynthesis; 7,8-dihydroneopterin triphosphate from GTP: step 1/1. This chain is GTP cyclohydrolase 1, found in Wolinella succinogenes (strain ATCC 29543 / DSM 1740 / CCUG 13145 / JCM 31913 / LMG 7466 / NCTC 11488 / FDC 602W) (Vibrio succinogenes).